A 79-amino-acid polypeptide reads, in one-letter code: Putative antitoxin MM_2475 (79 aa).

This sequence belongs to the UPF0330 family.

Functionally, possibly the antitoxin component of a type II toxin-antitoxin (TA) system. This is Putative antitoxin MM_2475 from Methanosarcina mazei (strain ATCC BAA-159 / DSM 3647 / Goe1 / Go1 / JCM 11833 / OCM 88) (Methanosarcina frisia).